The primary structure comprises 152 residues: Arginine repressor (152 aa).

Belongs to the ArgR family.

It is found in the cytoplasm. It functions in the pathway amino-acid biosynthesis; L-arginine biosynthesis [regulation]. Regulates arginine biosynthesis genes. The sequence is that of Arginine repressor from Lactococcus lactis subsp. cremoris (strain MG1363).